The chain runs to 278 residues: Octanoyltransferase LipM (278 aa).

A BPL/LPL catalytic domain is found at 33–248 (KKMPPTIRFY…GFEKGLDVEL (216 aa)). The active-site Acyl-thioester intermediate is the C150.

It belongs to the octanoyltransferase LipM family. Monomer.

The catalysed reaction is octanoyl-[ACP] + L-lysyl-[protein] = N(6)-octanoyl-L-lysyl-[protein] + holo-[ACP] + H(+). It participates in protein modification; protein lipoylation via endogenous pathway; protein N(6)-(lipoyl)lysine from octanoyl-[acyl-carrier-protein]. In terms of biological role, catalyzes the transfer of endogenously produced octanoic acid from octanoyl-acyl-carrier-protein onto the lipoyl domain of GcvH, an intermediate carrier during protein lipoylation. This chain is Octanoyltransferase LipM, found in Bacillus anthracis.